We begin with the raw amino-acid sequence, 238 residues long: Dof zinc finger protein MNB1A (238 aa).

A compositionally biased stretch (low complexity) spans 1-13; sequence MQEASSAAAAGAE. Residues 1–48 are disordered; it reads MQEASSAAAAGAEPGRRAAQHQFAGVDLRRPKGYAAPAPAPAVGEGDP. The segment at 47-101 adopts a Dof-type zinc-finger fold; the sequence is DPCPRCASRDTKFCYYNNYNTSQPRHFCKGCRRYWTKGGTLRNVPVGGGTRKKPS. Zn(2+)-binding residues include cysteine 49, cysteine 52, cysteine 74, and cysteine 77. Residues 85 to 155 form a disordered region; the sequence is GTLRNVPVGG…TATTTTTTSE (71 aa). Basic residues predominate over residues 119-130; the sequence is PKKKPASKKRRV. Residues 138 to 155 show a composition bias toward low complexity; that stretch reads ATAADPGKTATTTTTTSE.

Expressed in all tissues examined.

The protein resides in the nucleus. In terms of biological role, transcription factor that binds specifically to a 5'-AA[AG]G-3' consensus core sequence at the MNF1-binding site. This is Dof zinc finger protein MNB1A (MNB1A) from Zea mays (Maize).